A 215-amino-acid chain; its full sequence is SAGA complex/transcription factor TFIID complex subunit Taf10 (215 aa).

The interval 1 to 77 (MSDINNNEPA…SRERHGSNYV (77 aa)) is disordered. Positions 23-42 (GNNSMSVDEQPETSSTNLPT) are enriched in polar residues. Over residues 58 to 73 (NNEDSPKSDDSRERHG) the composition is skewed to basic and acidic residues. The 146-residue stretch at 58–203 (NNEDSPKSDD…VDDLSAALNE (146 aa)) folds into the Histone-fold domain.

Belongs to the TAF10 family. As to quaternary structure, component of the 1.8 MDa SAGA (Spt-Ada-Gcn5 acetyltransferase) complex, which is composed of 19 subunits tra1, spt7, taf5, ngg1/ada3, sgf73, spt20, spt8, taf12, taf6, hfi1/ada1, ubp8, gcn5, ada2, spt3, sgf29, taf10, taf9, sgf11 and sus1. The SAGA complex is composed of 4 modules, namely the HAT (histone acetyltransferase) module (gcn5, ada2, ngg1/ada3 and sgf29), the DUB (deubiquitinating) module (ubp8, sgf11, sgf73 and sus1), the core or TAF (TBP-associated factor) module (taf5, taf6, taf9, taf10 and taf12), and the Tra1 or SPT (Suppressor of Ty) module (tra1, hfi1/ada1, spt3, spt7, spt8 and spt20). The Tra1/SPT module binds activators, the core module recruits TBP (TATA-binding protein), the HAT module contains the histone H3 acetyltransferase gcn5, and the DUB module comprises the histone H2B deubiquitinase ubp8. Component of the 1.2 MDa TFIID complex, which is composed of TATA-binding protein (TBP) and the 14 TBP-associated factors (TAFs). It comprises 1 copy of each taf1, taf2, taf3, taf7, taf8, taf11, taf13, 2 copies of each taf4, taf5, taf6, taf9, taf10, taf12, and 3 copies of taf14. In TFIID, taf10 heterodimerizes with taf3 and taf8.

It localises to the nucleus. Functions as a component of both the DNA-binding general transcription initiation factor complex TFIID and the transcription coactivator SAGA complex. Binding of TFIID to a promoter (with or without TATA element) is the initial step in pre-initiation complex (PIC) formation. TFIID plays a key role in the regulation of gene expression by RNA polymerase II through different activities such as transcription activator interaction, core promoter recognition and selectivity, TFIIA and TFIIB interaction, chromatin modification (histone acetylation by TAF1), facilitation of DNA opening and initiation of transcription. SAGA acts as a general cofactor required for essentially all RNA polymerase II transcription. At the promoters, SAGA is required for transcription pre-initiation complex (PIC) recruitment. It influences RNA polymerase II transcriptional activity through different activities such as TBP interaction (via core/TAF module) and promoter selectivity, interaction with transcription activators (via Tra1/SPT module), and chromatin modification through histone acetylation (via HAT module) and deubiquitination (via DUB module). SAGA preferentially acetylates histones H3 (to form H3K9ac, H3K14ac, H3K18ac and H3K23ac) and H2B and deubiquitinates histone H2B. SAGA interacts with DNA via upstream activating sequences (UASs). The polypeptide is SAGA complex/transcription factor TFIID complex subunit Taf10 (Schizosaccharomyces pombe (strain 972 / ATCC 24843) (Fission yeast)).